Reading from the N-terminus, the 215-residue chain is Sperm acrosome membrane-associated protein 3 (215 aa).

At 1–63 (MVSALRGAPL…EARSRALRRR (63 aa)) the chain is on the cytoplasmic side. The chain crosses the membrane as a helical; Signal-anchor for type II membrane protein span at residues 64–84 (WCPAGIMLLALVCLLSCLLPS). Over 85-215 (SEAKLYGRCE…LTEWVDGCDF (131 aa)) the chain is Extracellular. The 128-residue stretch at 88–215 (KLYGRCELAR…LTEWVDGCDF (128 aa)) folds into the C-type lysozyme domain. Cystine bridges form between C93-C213, C117-C201, C151-C166, and C162-C180.

It belongs to the glycosyl hydrolase 22 family. As to quaternary structure, interacts with ASTL. The processed form derives from the membrane form by proteolytic processing. As to expression, the processed form is expressed in sperm (at protein level). Expressed in testis, epididymis and placenta.

The protein resides in the cytoplasmic vesicle. Its subcellular location is the secretory vesicle. It localises to the acrosome membrane. It is found in the secreted. Functionally, sperm surface membrane protein that may be involved in sperm-egg plasma membrane adhesion and fusion during fertilization. It could be a potential receptor for the egg oligosaccharide residue N-acetylglucosamine, which is present in the extracellular matrix over the egg plasma membrane. The processed form has no detectable bacteriolytic activity in vitro. In Homo sapiens (Human), this protein is Sperm acrosome membrane-associated protein 3 (SPACA3).